Reading from the N-terminus, the 67-residue chain is Protein DsrB (67 aa).

The protein belongs to the DsrB family.

This is Protein DsrB from Pectobacterium carotovorum subsp. carotovorum (strain PC1).